Consider the following 463-residue polypeptide: L-seryl-tRNA(Sec) selenium transferase (463 aa).

Lys295 carries the post-translational modification N6-(pyridoxal phosphate)lysine.

Belongs to the SelA family. In terms of assembly, homodecamer; pentamer of dimers. Binds only one seryl-tRNA(Sec) per dimer. Requires pyridoxal 5'-phosphate as cofactor.

The protein resides in the cytoplasm. It catalyses the reaction L-seryl-tRNA(Sec) + selenophosphate + H(+) = L-selenocysteinyl-tRNA(Sec) + phosphate. Its pathway is aminoacyl-tRNA biosynthesis; selenocysteinyl-tRNA(Sec) biosynthesis; selenocysteinyl-tRNA(Sec) from L-seryl-tRNA(Sec) (bacterial route): step 1/1. In terms of biological role, converts seryl-tRNA(Sec) to selenocysteinyl-tRNA(Sec) required for selenoprotein biosynthesis. This Shigella boydii serotype 18 (strain CDC 3083-94 / BS512) protein is L-seryl-tRNA(Sec) selenium transferase.